Consider the following 304-residue polypeptide: Bifunctional phosphoglucose/phosphomannose isomerase (304 aa).

The region spanning 16–147 (FDKSFKVGKY…KPKIGDVDEA (132 aa)) is the SIS domain. Glycine 35, serine 36, serine 74, serine 76, threonine 79, and arginine 122 together coordinate D-fructose 6-phosphate. Glutamate 196 serves as the catalytic Proton acceptor. Histidine 212 and lysine 300 together coordinate D-fructose 6-phosphate. Histidine 212 (proton donor) is an active-site residue. The Proton acceptor role is filled by lysine 300.

This sequence belongs to the PGI/PMI family. Homodimer.

It catalyses the reaction alpha-D-glucose 6-phosphate = beta-D-fructose 6-phosphate. It carries out the reaction D-mannose 6-phosphate = D-fructose 6-phosphate. Dual specificity isomerase that catalyzes the isomerization of both glucose-6-phosphate and mannose-6-phosphate to fructose-6-phosphate. This Thermoplasma volcanium (strain ATCC 51530 / DSM 4299 / JCM 9571 / NBRC 15438 / GSS1) protein is Bifunctional phosphoglucose/phosphomannose isomerase.